The sequence spans 268 residues: Undecaprenyl-diphosphatase (268 aa).

7 helical membrane-spanning segments follow: residues 43–63 (FWKTFAVLIQLGAILAILAIY), 85–105 (IGVLVAFLPAVILGLIFGTFI), 108–128 (VLFNPWVVCFSLIAGGAVLLW), 141–161 (AMAFPLPMYLGIGIAQCAAMV), 184–204 (AAEFSFFLAIPTMLGAFVYDV), 217–237 (FIIIVGFVVSFITAIVVVKTF), and 246–266 (FTFFAWWRVIVGTLGLIALAL).

This sequence belongs to the UppP family.

The protein resides in the cell inner membrane. The enzyme catalyses di-trans,octa-cis-undecaprenyl diphosphate + H2O = di-trans,octa-cis-undecaprenyl phosphate + phosphate + H(+). In terms of biological role, catalyzes the dephosphorylation of undecaprenyl diphosphate (UPP). Confers resistance to bacitracin. This chain is Undecaprenyl-diphosphatase, found in Afipia carboxidovorans (strain ATCC 49405 / DSM 1227 / KCTC 32145 / OM5) (Oligotropha carboxidovorans).